The following is a 197-amino-acid chain: Na(+)-translocating NADH-quinone reductase subunit E (197 aa).

Transmembrane regions (helical) follow at residues 11-31 (SVFIENMALSFFLGMCTFLAV), 35-55 (VSTAFGLGVAVIFVLGLSVPA), 76-96 (FLKFITFIGVIAALVQILEMF), 108-128 (LGIYLPLITVNCAIFGAVSFM), 139-159 (VVYGFGAGLGWMLAIVALAGI), and 175-195 (LGITFIAAGLMAMAFMSFSGI).

Belongs to the NqrDE/RnfAE family. In terms of assembly, composed of six subunits; NqrA, NqrB, NqrC, NqrD, NqrE and NqrF.

The protein resides in the cell inner membrane. It catalyses the reaction a ubiquinone + n Na(+)(in) + NADH + H(+) = a ubiquinol + n Na(+)(out) + NAD(+). Its function is as follows. NQR complex catalyzes the reduction of ubiquinone-1 to ubiquinol by two successive reactions, coupled with the transport of Na(+) ions from the cytoplasm to the periplasm. NqrA to NqrE are probably involved in the second step, the conversion of ubisemiquinone to ubiquinol. This chain is Na(+)-translocating NADH-quinone reductase subunit E, found in Neisseria meningitidis serogroup A / serotype 4A (strain DSM 15465 / Z2491).